Consider the following 627-residue polypeptide: Zinc finger protein 256 (627 aa).

The KRAB domain occupies 14 to 96 (VTFEDVAVYF…QKTNPCEICG (83 aa)). The tract at residues 55–76 (GSGAGDEEAPYQQSTSPQRVSQ) is disordered. Residues 65-75 (YQQSTSPQRVS) are compositionally biased toward polar residues. C2H2-type zinc fingers lie at residues 90–112 (NPCEICGPVLRQILHLVEHQGTH), 239–261 (YMCSECGKSFSTSCSLSDHLRVH), 267–289 (YTCGECGKSYRQSSSLITHRRIH), 295–317 (HQCDECGKLFNRKYDLLIHQRVH), 323–345 (YKCSECGKSFSHSSSLITHQRIH), 351–373 (YECSECGKSFIHSSSLITHQRVH), 379–401 (YMCSECGKSFSQSCHLIKHRRLH), 407–429 (YECSECGKLFTYRSRFFQHQRVH), 435–457 (HECHECGKLFSRKFDLIVHERVH), 463–485 (YECSECGKSFTCKSYLISHWKVH), 491–513 (YECGECGKSFTHSSTLLQHQRVH), 519–541 (YECNECGKFFSQSSSLIRHRRSH), 547–569 (YECSECWKSFSNHSSLVKHRRVH), 575–597 (YECSECGKSFSQSSNLTNHQRIH), and 603–625 (YECSDCGKFFTFNSNLLKHQNVH).

Belongs to the krueppel C2H2-type zinc-finger protein family. As to quaternary structure, interacts with TRIM28.

It localises to the nucleus. Its function is as follows. Transcriptional repressor that plays a role in cell proliferation. Requires TRIM28 for its activity. The sequence is that of Zinc finger protein 256 (ZNF256) from Homo sapiens (Human).